The chain runs to 530 residues: Probable 1,4-beta-D-glucan cellobiohydrolase B (530 aa).

The signal sequence occupies residues 1–26 (MLASTFSYRMYKTALILAALLGSGQA). The interval 27–461 (QQVGTSQAEV…SNIKVGPIGS (435 aa)) is catalytic. Glutamate 238 serves as the catalytic Nucleophile. Glutamate 243 serves as the catalytic Proton donor. An N-linked (GlcNAc...) asparagine glycan is attached at asparagine 296. Positions 462-492 (TFNSGGSNPGGGTTTTAKPTTTTTTAGSPGG) are disordered. The interval 462–494 (TFNSGGSNPGGGTTTTAKPTTTTTTAGSPGGTG) is ser/Thr-rich linker. Residues 475 to 488 (TTTAKPTTTTTTAG) are compositionally biased toward low complexity. The CBM1 domain occupies 494–530 (GVAQHYGQCGGNGWQGPTTCASPYTCQKLNDFYSQCL). 2 disulfides stabilise this stretch: cysteine 502-cysteine 519 and cysteine 513-cysteine 529.

It belongs to the glycosyl hydrolase 7 (cellulase C) family.

It is found in the secreted. It catalyses the reaction Hydrolysis of (1-&gt;4)-beta-D-glucosidic linkages in cellulose and cellotetraose, releasing cellobiose from the non-reducing ends of the chains.. Functionally, the biological conversion of cellulose to glucose generally requires three types of hydrolytic enzymes: (1) Endoglucanases which cut internal beta-1,4-glucosidic bonds; (2) Exocellobiohydrolases that cut the disaccharide cellobiose from the non-reducing end of the cellulose polymer chain; (3) Beta-1,4-glucosidases which hydrolyze the cellobiose and other short cello-oligosaccharides to glucose. This Neosartorya fischeri (strain ATCC 1020 / DSM 3700 / CBS 544.65 / FGSC A1164 / JCM 1740 / NRRL 181 / WB 181) (Aspergillus fischerianus) protein is Probable 1,4-beta-D-glucan cellobiohydrolase B (cbhB).